The chain runs to 319 residues: High mobility group B protein 10 (319 aa).

A compositionally biased stretch (polar residues) spans 1-13; sequence MSTDISPPYSQTH. Residues 1–25 are disordered; sequence MSTDISPPYSQTHVEPVNGYPSDNK. The ARID domain maps to 40-131; the sequence is VRNSALFWEK…FLFQLEHVYY (92 aa). Residues 203 to 220 show a composition bias toward polar residues; sequence PSQSQQTMETPSAIVQSS. Residues 203-230 form a disordered region; the sequence is PSQSQQTMETPSAIVQSSQRRHRKKSKL. The HMG box DNA-binding region spans 238–305; that stretch reads PKCHRSGYNF…RYRIEMLEYK (68 aa).

As to expression, ubiquitously expressed.

Its subcellular location is the nucleus. Functionally, binds preferentially DNA with A/T-rich content. The protein is High mobility group B protein 10 (HMGB10) of Arabidopsis thaliana (Mouse-ear cress).